The following is a 262-amino-acid chain: MIRLDVPTPWGIRLQDSATPNAEGIHELYDHIMFYLCLILGLVSYILYVIIKDYKDNRFAYKYVRHGQVIEIIWTIFPAVILLLIAFPSFILLYLCDEVLTPAMTIKVIGLQWYWKYEYSDFVDSIGETIEFESYVIPDDMLEPGALRLLDTDTSIVVPVDTHIRFVVTANDVIHSFTIPSLGMKIDATPGRLNQVSALIQRTGVYYGQCSELCGVNHGMMPIKLECVSIEDFIEWLGENEVSLNSSMVEQCTVNALILVQF.

2 helical membrane passes run 31–51 and 72–92; these read HIMF…YVII and IIWT…SFIL. 6 residues coordinate Cu cation: histidine 175, cysteine 210, glutamate 212, cysteine 214, histidine 218, and methionine 221. Glutamate 212 provides a ligand contact to Mg(2+).

It belongs to the cytochrome c oxidase subunit 2 family. Component of the cytochrome c oxidase (complex IV, CIV), a multisubunit enzyme composed of a catalytic core of 3 subunits and several supernumerary subunits. The complex exists as a monomer or a dimer and forms supercomplexes (SCs) in the inner mitochondrial membrane with ubiquinol-cytochrome c oxidoreductase (cytochrome b-c1 complex, complex III, CIII). It depends on Cu cation as a cofactor.

It localises to the mitochondrion inner membrane. The enzyme catalyses 4 Fe(II)-[cytochrome c] + O2 + 8 H(+)(in) = 4 Fe(III)-[cytochrome c] + 2 H2O + 4 H(+)(out). In terms of biological role, component of the cytochrome c oxidase, the last enzyme in the mitochondrial electron transport chain which drives oxidative phosphorylation. The respiratory chain contains 3 multisubunit complexes succinate dehydrogenase (complex II, CII), ubiquinol-cytochrome c oxidoreductase (cytochrome b-c1 complex, complex III, CIII) and cytochrome c oxidase (complex IV, CIV), that cooperate to transfer electrons derived from NADH and succinate to molecular oxygen, creating an electrochemical gradient over the inner membrane that drives transmembrane transport and the ATP synthase. Cytochrome c oxidase is the component of the respiratory chain that catalyzes the reduction of oxygen to water. Electrons originating from reduced cytochrome c in the intermembrane space (IMS) are transferred via the dinuclear copper A center (CU(A)) of subunit 2 and heme A of subunit 1 to the active site in subunit 1, a binuclear center (BNC) formed by heme A3 and copper B (CU(B)). The BNC reduces molecular oxygen to 2 water molecules using 4 electrons from cytochrome c in the IMS and 4 protons from the mitochondrial matrix. In Candida albicans (strain SC5314 / ATCC MYA-2876) (Yeast), this protein is Cytochrome c oxidase subunit 2 (COX2).